The sequence spans 666 residues: DNA mismatch repair protein MutL (666 aa).

The protein belongs to the DNA mismatch repair MutL/HexB family.

Its function is as follows. This protein is involved in the repair of mismatches in DNA. It is required for dam-dependent methyl-directed DNA mismatch repair. May act as a 'molecular matchmaker', a protein that promotes the formation of a stable complex between two or more DNA-binding proteins in an ATP-dependent manner without itself being part of a final effector complex. This chain is DNA mismatch repair protein MutL, found in Clostridium botulinum (strain Kyoto / Type A2).